We begin with the raw amino-acid sequence, 353 residues long: Rhodopsin (353 aa).

Residues 1–36 (MNGTEGPYFYIPMVNTTGIVRSPYEYPQYYLVNPAA) are Extracellular-facing. 2 N-linked (GlcNAc...) asparagine glycosylation sites follow: Asn-2 and Asn-15. Residues 37-61 (YAALGAYMFLLILLGFPINFLTLYV) form a helical membrane-spanning segment. Residues 62-73 (TIEHKKLRTPLN) are Cytoplasmic-facing. Residues 74–96 (YILLNLAVANLFMVFGGFTTTMY) form a helical membrane-spanning segment. Residues 97–110 (TSMHGYFVLGRLGC) lie on the Extracellular side of the membrane. Cysteines 110 and 187 form a disulfide. A helical membrane pass occupies residues 111–133 (NLEGFFATLGGEIALWSLVVLAV). The 'Ionic lock' involved in activated form stabilization motif lies at 134–136 (ERW). The Cytoplasmic portion of the chain corresponds to 134 to 152 (ERWMVVCKPISNFRFGENH). The chain crosses the membrane as a helical span at residues 153-173 (AIMGLAFTWVMASACAVPPLV). Residues 174 to 202 (GWSRYIPEGMQCSCGIDYYTRAEGFNNES) lie on the Extracellular side of the membrane. Residue Asn-200 is glycosylated (N-linked (GlcNAc...) asparagine). Residues 203-224 (FVIYMFVCHFLIPLVVVFFCYG) traverse the membrane as a helical segment. Residues 225–252 (RLLCAVKEAAAAQQESETTQRAEREVSR) are Cytoplasmic-facing. The helical transmembrane segment at 253 to 274 (MVVIMVVAFLICWCPYAGVAWY) threads the bilayer. Residues 275–286 (IFTHQGSEFGPL) are Extracellular-facing. A helical transmembrane segment spans residues 287-308 (FMTFPAFFAKSSSIYNPMIYIC). Lys-296 carries the N6-(retinylidene)lysine modification. The Cytoplasmic portion of the chain corresponds to 309-353 (MNKQFRHCMITTLCCGKNPFEEEEGASTTSKTEASSVSSSSVSPA). 2 S-palmitoyl cysteine lipidation sites follow: Cys-322 and Cys-323. Residues 330–353 (EEEGASTTSKTEASSVSSSSVSPA) form a disordered region. Positions 334–353 (ASTTSKTEASSVSSSSVSPA) are enriched in low complexity.

This sequence belongs to the G-protein coupled receptor 1 family. Opsin subfamily. In terms of processing, phosphorylated on some or all of the serine and threonine residues present in the C-terminal region. Contains one covalently linked retinal chromophore.

It is found in the membrane. The protein localises to the cell projection. Its subcellular location is the cilium. It localises to the photoreceptor outer segment. Functionally, photoreceptor required for image-forming vision at low light intensity. While most salt water fish species use retinal as chromophore, most freshwater fish use 3-dehydroretinal, or a mixture of retinal and 3-dehydroretinal. Light-induced isomerization of 11-cis to all-trans retinal triggers a conformational change that activates signaling via G-proteins. Subsequent receptor phosphorylation mediates displacement of the bound G-protein alpha subunit by arrestin and terminates signaling. This Mugil cephalus (Flathead mullet) protein is Rhodopsin (rho).